The sequence spans 351 residues: MLPDWISLDCAAPSESHRQAAMARQAQLTKPLGALGRLEEVAVELAALQATDHPGADRAPVVLFAGDHGIAAQGVSAYPPEVTVQMLRNFAGGGAAIAVLARHLNCPLEVVDVGTLASDAVPGVVADKTRRGTRDFSVAQALTPEEVAFACDAGRRALARQADHQPQLVIFGEMGIGNTTSAAAIAAALLSCAPVDIVGSGTGLDADGRAKKAAVIVAALARHGLTSDAAVADILAAVGGFEIIAMAGAMIAAAQRRWPVLVDGFIVSVAALAAVRLNPSCRTWLLFSHRSAERGHALVLDALGAHPLIDLDLRLGEASGAATALPIIRLACALHNGMATFAEAAVSGRDA.

Glutamate 317 (proton acceptor) is an active-site residue.

Belongs to the CobT family.

The enzyme catalyses 5,6-dimethylbenzimidazole + nicotinate beta-D-ribonucleotide = alpha-ribazole 5'-phosphate + nicotinate + H(+). It functions in the pathway nucleoside biosynthesis; alpha-ribazole biosynthesis; alpha-ribazole from 5,6-dimethylbenzimidazole: step 1/2. Functionally, catalyzes the synthesis of alpha-ribazole-5'-phosphate from nicotinate mononucleotide (NAMN) and 5,6-dimethylbenzimidazole (DMB). This Bradyrhizobium sp. (strain BTAi1 / ATCC BAA-1182) protein is Nicotinate-nucleotide--dimethylbenzimidazole phosphoribosyltransferase.